The chain runs to 883 residues: DNA double-strand break repair Rad50 ATPase (883 aa).

Residues Arg-12, 32 to 38 (NGSGKSS), and Gln-134 each bind ATP. Positions 218-420 (ELRGELGGLE…EIGSRRGELK (203 aa)) form a coiled coil. A Zinc-hook domain is found at 395–492 (IQKARERKEE…ELVEVEKTLK (98 aa)). Cys-440 and Cys-443 together coordinate Zn(2+). Coiled coils occupy residues 452 to 585 (RKEL…KKLG) and 620 to 741 (EDLL…LLKE). Position 790–795 (790–795 (FLSGGE)) interacts with ATP.

This sequence belongs to the SMC family. RAD50 subfamily. As to quaternary structure, homodimer. Forms a heterotetramer composed of two Mre11 subunits and two Rad50 subunits. The cofactor is Zn(2+).

Part of the Rad50/Mre11 complex, which is involved in the early steps of DNA double-strand break (DSB) repair. The complex may facilitate opening of the processed DNA ends to aid in the recruitment of HerA and NurA. Rad50 controls the balance between DNA end bridging and DNA resection via ATP-dependent structural rearrangements of the Rad50/Mre11 complex. The chain is DNA double-strand break repair Rad50 ATPase from Thermococcus kodakarensis (strain ATCC BAA-918 / JCM 12380 / KOD1) (Pyrococcus kodakaraensis (strain KOD1)).